The chain runs to 227 residues: 7-cyano-7-deazaguanine synthase (227 aa).

7–17 provides a ligand contact to ATP; the sequence is VSGGMDSLVAT. 4 residues coordinate Zn(2+): Cys187, Cys195, Cys198, and Cys201.

This sequence belongs to the QueC family. Requires Zn(2+) as cofactor.

It carries out the reaction 7-carboxy-7-deazaguanine + NH4(+) + ATP = 7-cyano-7-deazaguanine + ADP + phosphate + H2O + H(+). It functions in the pathway purine metabolism; 7-cyano-7-deazaguanine biosynthesis. Functionally, catalyzes the ATP-dependent conversion of 7-carboxy-7-deazaguanine (CDG) to 7-cyano-7-deazaguanine (preQ(0)). The sequence is that of 7-cyano-7-deazaguanine synthase from Chlorobaculum tepidum (strain ATCC 49652 / DSM 12025 / NBRC 103806 / TLS) (Chlorobium tepidum).